The primary structure comprises 182 residues: Ribosome maturation factor RimM (182 aa).

Positions 103–182 constitute a PRC barrel domain; it reads VGDYYWKDLI…TIEVDWDPGF (80 aa).

The protein belongs to the RimM family. In terms of assembly, binds ribosomal protein uS19.

It is found in the cytoplasm. In terms of biological role, an accessory protein needed during the final step in the assembly of 30S ribosomal subunit, possibly for assembly of the head region. Essential for efficient processing of 16S rRNA. May be needed both before and after RbfA during the maturation of 16S rRNA. It has affinity for free ribosomal 30S subunits but not for 70S ribosomes. This chain is Ribosome maturation factor RimM, found in Pectobacterium atrosepticum (strain SCRI 1043 / ATCC BAA-672) (Erwinia carotovora subsp. atroseptica).